A 283-amino-acid chain; its full sequence is Hydroxyacylglutathione hydrolase-like protein (283 aa).

Residues histidine 54, histidine 56, aspartate 58, histidine 59, histidine 110, aspartate 134, and histidine 173 each coordinate Zn(2+).

Belongs to the metallo-beta-lactamase superfamily. Glyoxalase II family. Zn(2+) serves as cofactor.

Hydrolase acting on ester bonds. This is Hydroxyacylglutathione hydrolase-like protein (Haghl) from Mus musculus (Mouse).